The chain runs to 251 residues: Triosephosphate isomerase (251 aa).

9-11 (NWK) is a substrate binding site. His-95 acts as the Electrophile in catalysis. Glu-167 acts as the Proton acceptor in catalysis. Substrate contacts are provided by residues Gly-173, Ser-213, and 234-235 (GG). At Ser-213 the chain carries Phosphoserine.

It belongs to the triosephosphate isomerase family. In terms of assembly, homodimer.

It localises to the cytoplasm. It carries out the reaction D-glyceraldehyde 3-phosphate = dihydroxyacetone phosphate. The protein operates within carbohydrate biosynthesis; gluconeogenesis. It functions in the pathway carbohydrate degradation; glycolysis; D-glyceraldehyde 3-phosphate from glycerone phosphate: step 1/1. Functionally, involved in the gluconeogenesis. Catalyzes stereospecifically the conversion of dihydroxyacetone phosphate (DHAP) to D-glyceraldehyde-3-phosphate (G3P). This chain is Triosephosphate isomerase, found in Bacillus cytotoxicus (strain DSM 22905 / CIP 110041 / 391-98 / NVH 391-98).